A 117-amino-acid polypeptide reads, in one-letter code: Pre-mRNA-splicing factor ini1 (117 aa).

The protein belongs to the PHF5 family.

The protein localises to the nucleus. In terms of biological role, required for pre-mRNA splicing. This chain is Pre-mRNA-splicing factor ini1 (ini1), found in Schizosaccharomyces pombe (strain 972 / ATCC 24843) (Fission yeast).